We begin with the raw amino-acid sequence, 596 residues long: uncharacterized protein (596 aa).

Positions methionine 1–alanine 20 are cleaved as a signal peptide. 2 stretches are compositionally biased toward basic and acidic residues: residues alanine 25–threonine 90 and valine 161–threonine 184. The disordered stretch occupies residues alanine 25–threonine 184. 2 coiled-coil regions span residues arginine 177–serine 281 and asparagine 318–aspartate 454.

The protein belongs to the peptidase M23B family.

This is an uncharacterized protein from Neisseria meningitidis serogroup B (strain ATCC BAA-335 / MC58).